A 101-amino-acid chain; its full sequence is Small ribosomal subunit protein uS14 (101 aa).

The protein belongs to the universal ribosomal protein uS14 family. As to quaternary structure, part of the 30S ribosomal subunit. Contacts proteins S3 and S10.

Functionally, binds 16S rRNA, required for the assembly of 30S particles and may also be responsible for determining the conformation of the 16S rRNA at the A site. The sequence is that of Small ribosomal subunit protein uS14 from Idiomarina loihiensis (strain ATCC BAA-735 / DSM 15497 / L2-TR).